Reading from the N-terminus, the 557-residue chain is Potassium-transporting ATPase potassium-binding subunit (557 aa).

The next 12 membrane-spanning stretches (helical) occupy residues 5-25, 63-83, 132-152, 170-190, 253-273, 283-303, 329-349, 356-376, 379-399, 416-436, 484-504, and 526-546; these read GFLL…PLGS, LCAI…MLLG, GLTV…FAFI, LLRI…LFLI, FVQM…FGEV, LLWA…WAEV, VLVS…AVIA, ALGG…FGGV, GLYG…LMIG, LTAL…ALAM, LLAF…MAIA, and LFVG…FIPA.

This sequence belongs to the KdpA family. The system is composed of three essential subunits: KdpA, KdpB and KdpC.

It is found in the cell inner membrane. Functionally, part of the high-affinity ATP-driven potassium transport (or Kdp) system, which catalyzes the hydrolysis of ATP coupled with the electrogenic transport of potassium into the cytoplasm. This subunit binds the periplasmic potassium ions and delivers the ions to the membrane domain of KdpB through an intramembrane tunnel. In Shigella boydii serotype 18 (strain CDC 3083-94 / BS512), this protein is Potassium-transporting ATPase potassium-binding subunit.